We begin with the raw amino-acid sequence, 422 residues long: MSEIISVISREILDSRGNPTVEVEVTTADGNMGRAAVPSGASTGAHEACELRDGDKNRFLGKGVYKAVDNVREKIAPEIVGLQATEQVYIDKILRDIDGTENKSNLGANAILGVSLAVAKAAAKDCRLPLYRYVGGSQASRLPVPLMNVLNGGAHANNGLDIQEFMIVPTVNNSYAESLRAGTEIFHTLKKILAKKGLSTAVGDEGGFAPKLGSNQEALDLLMNAIVDAGYDPGQNVFLALDVAATEMFKEGKYEWQGGHISPTELLGIYKSWAEKYPLVSIEDGFAEDDWDSWVQSTAQMGSTMQLIGDDLFVTNPKRLRMGLEKKAGNALLVKVNQIGTLTETYEAVNLAQRNKFRTIMSHRSGETEDVTIADLAVGLNCHQIKTGSLCRGERTAKYNQLLRIEEDLGGMGLYWDKAAFR.

Glutamine 163 provides a ligand contact to (2R)-2-phosphoglycerate. Glutamate 205 (proton donor) is an active-site residue. Residues aspartate 242, glutamate 283, and aspartate 310 each contribute to the Mg(2+) site. 4 residues coordinate (2R)-2-phosphoglycerate: lysine 335, arginine 364, serine 365, and lysine 386. Lysine 335 functions as the Proton acceptor in the catalytic mechanism.

It belongs to the enolase family. The cofactor is Mg(2+).

It localises to the cytoplasm. It is found in the secreted. The protein resides in the cell surface. It carries out the reaction (2R)-2-phosphoglycerate = phosphoenolpyruvate + H2O. Its pathway is carbohydrate degradation; glycolysis; pyruvate from D-glyceraldehyde 3-phosphate: step 4/5. In terms of biological role, catalyzes the reversible conversion of 2-phosphoglycerate (2-PG) into phosphoenolpyruvate (PEP). It is essential for the degradation of carbohydrates via glycolysis. The sequence is that of Enolase from Bdellovibrio bacteriovorus (strain ATCC 15356 / DSM 50701 / NCIMB 9529 / HD100).